The chain runs to 273 residues: Aspartate/glutamate leucyltransferase (273 aa).

Belongs to the R-transferase family. Bpt subfamily.

The protein resides in the cytoplasm. The catalysed reaction is N-terminal L-glutamyl-[protein] + L-leucyl-tRNA(Leu) = N-terminal L-leucyl-L-glutamyl-[protein] + tRNA(Leu) + H(+). The enzyme catalyses N-terminal L-aspartyl-[protein] + L-leucyl-tRNA(Leu) = N-terminal L-leucyl-L-aspartyl-[protein] + tRNA(Leu) + H(+). In terms of biological role, functions in the N-end rule pathway of protein degradation where it conjugates Leu from its aminoacyl-tRNA to the N-termini of proteins containing an N-terminal aspartate or glutamate. This Ruegeria pomeroyi (strain ATCC 700808 / DSM 15171 / DSS-3) (Silicibacter pomeroyi) protein is Aspartate/glutamate leucyltransferase.